Here is a 210-residue protein sequence, read N- to C-terminus: Fibrillarin-like rRNA/tRNA 2'-O-methyltransferase (210 aa).

Residues 72–73 (TT), 88–89 (EF), 113–114 (DA), and 134–137 (DVAT) each bind S-adenosyl-L-methionine.

The protein belongs to the methyltransferase superfamily. Fibrillarin family. In terms of assembly, interacts with nop5. Component of box C/D small ribonucleoprotein (sRNP) particles that contain rpl7ae, FlpA and nop5, plus a guide RNA.

Involved in pre-rRNA and tRNA processing. Utilizes the methyl donor S-adenosyl-L-methionine to catalyze the site-specific 2'-hydroxyl methylation of ribose moieties in rRNA and tRNA. Site specificity is provided by a guide RNA that base pairs with the substrate. Methylation occurs at a characteristic distance from the sequence involved in base pairing with the guide RNA. This chain is Fibrillarin-like rRNA/tRNA 2'-O-methyltransferase, found in Halobacterium salinarum (strain ATCC 29341 / DSM 671 / R1).